A 494-amino-acid chain; its full sequence is MGSTSSLYAAIDLGSNSFHMLVVREVAGSIQTLTRIKRKVRLAAGLNSENALSNEAMERGWQCLRLFAERLQDIPPSQIRVVATATLRLAVNAGDFIANAQEILGCPVQVISGEEEARLIYQGVAHTTGGADQRLVVDIGGASTELVTGTGAQTTSLFSLSMGCVTWLERYFADRNLGQENFDAAEKAAREVLRPVADELRYHGWKVCVGASGTVQALQEIMMAQGMDERITLEKLQQLKQRAIHCGRLEELEIDGLTLERALVFPSGLAILIAIFTELNIQCMTLAGGALREGLVYGMLHLAVEQDIRSRTLRNIQRRFMIDIDQAQRVAKVAANFFDQVEKEWHLEAISRDLLISACQLHEIGLSVDFKQAPQHAAYLVRNLDLPGFTPAQKKLLATLLLNQTNPVDLSSLHQQNAVPPRVAEQLCRLLRLAIIFASRRRDDLVPEMTLQANHELLTLTLPQGWLTQHPLGKEIIAQESQWQSYVHWPLEVH.

It belongs to the GppA/Ppx family. GppA subfamily.

The catalysed reaction is guanosine 3'-diphosphate 5'-triphosphate + H2O = guanosine 3',5'-bis(diphosphate) + phosphate + H(+). Its pathway is purine metabolism; ppGpp biosynthesis; ppGpp from GTP: step 2/2. Catalyzes the conversion of pppGpp to ppGpp. Guanosine pentaphosphate (pppGpp) is a cytoplasmic signaling molecule which together with ppGpp controls the 'stringent response', an adaptive process that allows bacteria to respond to amino acid starvation, resulting in the coordinated regulation of numerous cellular activities. The chain is Guanosine-5'-triphosphate,3'-diphosphate pyrophosphatase from Shigella sonnei (strain Ss046).